A 107-amino-acid polypeptide reads, in one-letter code: Serine-rich and transmembrane domain-containing protein 1 (107 aa).

A helical transmembrane segment spans residues 43–63; that stretch reads IYVSIFLSLLAFLLLLLIIAL.

It is found in the membrane. In Homo sapiens (Human), this protein is Serine-rich and transmembrane domain-containing protein 1 (SERTM1).